Consider the following 390-residue polypeptide: Protein-glutamate methylesterase/protein-glutamine glutaminase 1 (390 aa).

Residues Lys4 to Leu121 form the Response regulatory domain. Asp55 carries the post-translational modification 4-aspartylphosphate. Residues Ser132–Ala186 show a composition bias toward low complexity. The tract at residues Ser132–Ala201 is disordered. The CheB-type methylesterase domain occupies Pro195–Glu387. Active-site residues include Ser214, His241, and Asp334.

This sequence belongs to the CheB family. Phosphorylated by CheA. Phosphorylation of the N-terminal regulatory domain activates the methylesterase activity.

It localises to the cytoplasm. The catalysed reaction is [protein]-L-glutamate 5-O-methyl ester + H2O = L-glutamyl-[protein] + methanol + H(+). The enzyme catalyses L-glutaminyl-[protein] + H2O = L-glutamyl-[protein] + NH4(+). Functionally, involved in chemotaxis. Part of a chemotaxis signal transduction system that modulates chemotaxis in response to various stimuli. Catalyzes the demethylation of specific methylglutamate residues introduced into the chemoreceptors (methyl-accepting chemotaxis proteins or MCP) by CheR. Also mediates the irreversible deamidation of specific glutamine residues to glutamic acid. This is Protein-glutamate methylesterase/protein-glutamine glutaminase 1 from Pseudomonas syringae pv. tomato (strain ATCC BAA-871 / DC3000).